Reading from the N-terminus, the 343-residue chain is Major capsid protein VP1 (343 aa).

This sequence belongs to the polyomaviruses coat protein VP1 family. Homomultimer; disulfide-linked. The virus capsid is composed of 72 icosahedral units, each one composed of five disulfide-linked copies of VP1. Interacts with minor capsid proteins VP2 and VP3.

Its subcellular location is the virion. It localises to the host nucleus. Forms an icosahedral capsid with a T=7 symmetry and a 46-48 nm diameter. The capsid is composed of 72 pentamers linked to each other by disulfide bonds and associated with VP2 or VP3 proteins. Interacts with sialic acids on the cell surface to provide virion attachment to target cell. Once attached, the virion is internalized by endocytosis and traffics to the endoplasmic reticulum. Inside the endoplasmic reticulum, the protein folding machinery isomerizes VP1 interpentamer disulfide bonds, thereby triggering initial uncoating. Next, the virion uses the endoplasmic reticulum-associated degradation machinery to probably translocate in the cytosol before reaching the nucleus. Nuclear entry of the viral DNA involves the selective exposure and importin recognition of VP2/Vp3 nuclear localization signal. In late phase of infection, neo-synthesized VP1 encapsulates replicated genomic DNA in the nucleus, and participates in rearranging nucleosomes around the viral DNA. The polypeptide is Major capsid protein VP1 (Psittacidae (parrots)).